The primary structure comprises 173 residues: Placenta-specific protein 1 (173 aa).

Positions 1–23 (MKLIKFLGGVVFFTLMFSGYSEQ) are cleaved as a signal peptide.

Belongs to the PLAC1 family.

Its subcellular location is the secreted. In terms of biological role, may play a role in placental development. In Rattus norvegicus (Rat), this protein is Placenta-specific protein 1.